The sequence spans 509 residues: Midnolin (509 aa).

Polar residues predominate over residues 1–12 (MDQHPSARSCSS). Residues 1–27 (MDQHPSARSCSSRGAAPSCESVSGEPP) form a disordered region. The region spanning 28 to 102 (MNLYIHSTTG…LTLVPTVEAG (75 aa)) is the Ubiquitin-like domain. Disordered regions lie at residues 172-295 (GSSE…NTPL), 370-404 (QCTS…ETQP), and 448-485 (KRLR…EGSL). Positions 176–190 (GTTGLSHGASGSASG) are enriched in low complexity. Residues 196 to 209 (HNPHPHHPHQHPHH) show a composition bias toward basic residues. The segment covering 220 to 231 (AFPPSPSIPSIP) has biased composition (pro residues). Residues 261–285 (PSSACAPSPSSPSPAASCPEASCSA) are compositionally biased toward low complexity. Over residues 286–295 (KTSGNCNTPL) the composition is skewed to polar residues. The span at 376–386 (SPAPSPPPSPP) shows a compositional bias: pro residues. A compositionally biased stretch (low complexity) spans 387–400 (HTTGLTGLPTTVPS).

The protein localises to the nucleus. It localises to the cytoplasm. The protein resides in the cytosol. Its subcellular location is the nucleolus. Its function is as follows. Facilitates ubiquitin-independent proteasomal degradation of polycomb protein CBX4. Plays a role in inhibiting the activity of glucokinase GCK and both glucose-induced and basal insulin secretion. This Danio rerio (Zebrafish) protein is Midnolin (midn).